The chain runs to 134 residues: MADGDDRGGKRTPQKKNVVVESNGRAYVKATFNNVIVTLTDQYGNTISWASAGKMGFKGSRKNTPYAAQKAGESAANEAYELGLRRVDVYVKGPGSGREGAIRAMSESGLEVASIRDVTPLPHNGCRPPKRRRV.

It belongs to the universal ribosomal protein uS11 family. In terms of assembly, part of the 30S ribosomal subunit. Interacts with proteins S7 and S18. Binds to IF-3.

Located on the platform of the 30S subunit, it bridges several disparate RNA helices of the 16S rRNA. Forms part of the Shine-Dalgarno cleft in the 70S ribosome. The chain is Small ribosomal subunit protein uS11 from Salinibacter ruber (strain DSM 13855 / M31).